The primary structure comprises 239 residues: Ribose-5-phosphate isomerase A (239 aa).

Substrate contacts are provided by residues 40-43, 96-99, and 110-113; these read SGST, DGAD, and KGGG. The active-site Proton acceptor is Glu119. Substrate is bound at residue Lys137.

Belongs to the ribose 5-phosphate isomerase family. Homodimer.

It catalyses the reaction aldehydo-D-ribose 5-phosphate = D-ribulose 5-phosphate. It participates in carbohydrate degradation; pentose phosphate pathway; D-ribose 5-phosphate from D-ribulose 5-phosphate (non-oxidative stage): step 1/1. Functionally, catalyzes the reversible conversion of ribose-5-phosphate to ribulose 5-phosphate. In Methanococcus maripaludis (strain DSM 14266 / JCM 13030 / NBRC 101832 / S2 / LL), this protein is Ribose-5-phosphate isomerase A.